Reading from the N-terminus, the 2042-residue chain is Protein mini spindles (2042 aa).

TOG regions lie at residues Met-1 to Ser-229 and Met-267 to Gly-505. Positions Met-1–Gly-505 are binds tubulin. Promotes microtubule polymerization regions lie at residues Met-1–Pro-516 and Thr-581–Arg-1080. HEAT repeat units follow at residues Glu-120–His-157, Ile-160–Ala-197, Leu-270–Lys-311, Gly-315–Lys-353, Asn-357–Leu-394, Ala-396–Asn-433, and Leu-440–Leu-478. The association with microtubule lattice stretch occupies residues Glu-498–Ser-821. The disordered stretch occupies residues Pro-506–Lys-572. Residues Ala-513–Val-531 show a composition bias toward low complexity. Positions Thr-581–Pro-814 are TOG 3. HEAT repeat units follow at residues Glu-587–Asp-624, Ala-625–Ser-662, Thr-672–Val-710, and Leu-745–Lys-782. The tract at residues Asp-804 to Ala-849 is disordered. Over residues Gln-819–Pro-830 the composition is skewed to polar residues. Positions Asp-831 to Pro-845 are enriched in acidic residues. TOG stretches follow at residues Ala-849 to Pro-1087 and Thr-1179 to Pro-1415. HEAT repeat units follow at residues Asp-856–Leu-893, Pro-896–Ala-933, Asn-937–Tyr-974, and Glu-1017–Phe-1054. The segment at Leu-1083–Glu-1140 is disordered. The segment at Glu-1099 to Asp-1428 is association with microtubule lattice. HEAT repeat units lie at residues Arg-1205–Asp-1242, Asn-1272–Phe-1309, Lys-1311–Met-1344, and Ile-1346–Glu-1383. 2 disordered regions span residues Ala-1407 to Gln-1455 and Asn-1940 to Asp-1959. Over residues Asn-1940–Gly-1957 the composition is skewed to polar residues.

This sequence belongs to the TOG/XMAP215 family. Interacts with tacc, dgt6. Interacts with mv. Interacts with Patronin.

Its subcellular location is the cytoplasm. The protein resides in the cytoskeleton. It is found in the microtubule organizing center. The protein localises to the centrosome. It localises to the spindle. Its subcellular location is the perinuclear region. Its function is as follows. Binds to the plus end of microtubules and regulates microtubule dynamics and microtubule organization. Function in neurons is essential for adult survival, and is important for climbing behavior and activity. Promotes cytoplasmic microtubule nucleation and elongation. May act as a microtubule antipause factor that rapidly catalyzes the transition from pause to either growth or shrinkage. Involved in mitotic spindle elongation. Involved in the establishment of cell polarity and mitotic spindle orientation in neuroblasts. Required for maintaining the bipolarity of acentrosomal meiotic spindles; the function is dependent on tacc and involves ncd. Involved in oocyte microtubule cytoskeleton organization and bicoid mRNA localization. Seems to be involved in elongation of kinetochore-derived microtubule fibers. In fat body cells, essential component of perinuclear non-centrosomal microtubule-organizing centers (ncMTOCs) which function to accommodate the organization of microtubule (MT) networks to control nuclear positioning and dynein motor-based retrograde endosomal trafficking. Within the ncMTOCs, Msp300 and shot anchors the ncMTOC at the nuclear surface and recruits the MT minus-end regulators Patronin and Nin for assembly, anchoring and/or stabilization of circumferential and radial MTs at the ncMTOCs. Patronin, and perhaps Nin, then recruits msps to the ncMTOC where it is required for the gamma-tubulin-independent elongation and assembly of radial MTs. The protein is Protein mini spindles (msps) of Drosophila melanogaster (Fruit fly).